The primary structure comprises 180 residues: Small ribosomal subunit protein uS4 (180 aa).

An S4 RNA-binding domain is found at 103-165 (RRLQTLVYKK…KNSPFAKESH (63 aa)).

Belongs to the universal ribosomal protein uS4 family. Part of the 30S ribosomal subunit. Contacts protein S5. The interaction surface between S4 and S5 is involved in control of translational fidelity.

Its function is as follows. One of the primary rRNA binding proteins, it binds directly to 16S rRNA where it nucleates assembly of the body of the 30S subunit. In terms of biological role, with S5 and S12 plays an important role in translational accuracy. The protein is Small ribosomal subunit protein uS4 of Thermococcus gammatolerans (strain DSM 15229 / JCM 11827 / EJ3).